Reading from the N-terminus, the 344-residue chain is Lipase chaperone (344 aa).

The chain crosses the membrane as a helical span at residues 14-34; it reads AVVYGAVGLAAIAGVAMWSGA. Residues 37–78 form a disordered region; it reads HGGTGASGEPPDASAARGPAAAPPQAAVPASTSLPPSLAGSS. A compositionally biased stretch (low complexity) spans 43–78; sequence SGEPPDASAARGPAAAPPQAAVPASTSLPPSLAGSS.

It belongs to the lipase chaperone family.

It is found in the cell inner membrane. May be involved in the folding of the extracellular lipase during its passage through the periplasm. The chain is Lipase chaperone (lifO) from Burkholderia cepacia (Pseudomonas cepacia).